The primary structure comprises 33 residues: Pardaxin P-4 (33 aa).

The protein belongs to the pardaxin family. As to quaternary structure, monomer. In aqueous solution exists as a tetramer.

Its subcellular location is the secreted. The protein resides in the target cell membrane. In terms of biological role, exhibits unusual shark repellent and surfactant properties. Forms voltage-dependent, ion-permeable channels in membranes. At high concentration causes cell membrane lysis. This is Pardaxin P-4 from Pardachirus marmoratus (Finless sole).